A 156-amino-acid chain; its full sequence is V-type sodium ATPase subunit K (156 aa).

Helical transmembrane passes span 11–31 (GMVFAVLAMATATIFSGIGSA), 60–80 (LLPGTQGLYGFVIAFLIFINL), 89–109 (GLNFLGASLPIAFTGLFSGIA), and 132–152 (IIFAAMVETYAILGFVISFLL).

This sequence belongs to the V-ATPase proteolipid subunit family. Post-translationally, the N-terminus is blocked.

It is found in the cell membrane. In terms of biological role, involved in ATP-driven sodium extrusion. The sequence is that of V-type sodium ATPase subunit K (ntpK) from Enterococcus hirae (strain ATCC 9790 / DSM 20160 / JCM 8729 / LMG 6399 / NBRC 3181 / NCIMB 6459 / NCDO 1258 / NCTC 12367 / WDCM 00089 / R).